An 86-amino-acid chain; its full sequence is Progonadoliberin IIA (86 aa).

Residues 1 to 24 form the signal peptide; it reads MVHICRLFVVMGMLLCLSAQFASS. Q25 is modified (pyrrolidone carboxylic acid). G34 carries the glycine amide modification.

Belongs to the GnRH family. As to expression, olfactory bulbs, hypothalamus and telencephalon, midbrain and posterior brain areas.

The protein resides in the secreted. Its function is as follows. Stimulates the secretion of gonadotropins. This Carassius auratus (Goldfish) protein is Progonadoliberin IIA (gnrh2a).